Consider the following 790-residue polypeptide: Phenylalanine--tRNA ligase beta subunit (790 aa).

Residues 39-154 enclose the tRNA-binding domain; the sequence is PDSLNTVVTG…ENTPLGESAC (116 aa). Positions 404–483 constitute a B5 domain; that stretch reads SDPLSLNIRP…FVQKTQKILP (80 aa). Aspartate 457, aspartate 463, glutamate 466, and glutamate 467 together coordinate Mg(2+). In terms of domain architecture, FDX-ACB spans 694 to 790; that stretch reads PIYPSSSRDI…NLANIGKGNS (97 aa).

This sequence belongs to the phenylalanyl-tRNA synthetase beta subunit family. Type 1 subfamily. In terms of assembly, tetramer of two alpha and two beta subunits. Requires Mg(2+) as cofactor.

It localises to the cytoplasm. The catalysed reaction is tRNA(Phe) + L-phenylalanine + ATP = L-phenylalanyl-tRNA(Phe) + AMP + diphosphate + H(+). The chain is Phenylalanine--tRNA ligase beta subunit (pheT) from Chlamydia muridarum (strain MoPn / Nigg).